Reading from the N-terminus, the 190-residue chain is MDLSVLPNNNHPDKFLQLDVKSLTRSSALLQASLVRFPGGNYPAAQHWQNLVYSQREKKNIAAQRIRGSSADSLVTADSPPPSMSSVMKNNPLYGDLSLEEAMEERKKNPSWTIEEYDKHSLHTNLSGHLKENPNDLRFWLGDMYTPGFDTLLKKEEKQEKHSKFCRMGLILLVVISILVTIVTIITFFT.

At S79 the chain carries Phosphoserine. N-linked (GlcNAc...) asparagine glycosylation is found at N109 and N125. The chain crosses the membrane as a helical span at residues 169 to 189 (GLILLVVISILVTIVTIITFF).

This sequence belongs to the MINAR family. As to quaternary structure, interacts with NOTCH2. Highly expressed in the auditory hair cells.

It is found in the lysosome membrane. The protein localises to the endoplasmic reticulum membrane. Functionally, binds cholesterol and may regulate the distribution and homeostasis of cholesterol in hair cells. May play a role in angiogenesis. This Homo sapiens (Human) protein is Major intrinsically disordered NOTCH2-binding receptor 1-like.